The primary structure comprises 302 residues: GTPase Era (302 aa).

In terms of domain architecture, Era-type G spans 10-178 (RCGYVAIVGR…EAQIAKHLPE (169 aa)). The interval 18–25 (GRPNVGKS) is G1. A GTP-binding site is contributed by 18 to 25 (GRPNVGKS). The interval 44–48 (QTTRH) is G2. Residues 65–68 (DTPG) form a G3 region. GTP is bound by residues 65-69 (DTPGM) and 127-130 (NKTD). The G4 stretch occupies residues 127 to 130 (NKTD). The tract at residues 157-159 (ISA) is G5. Positions 201 to 285 (VREKIMRQLG…MLNLWVKVKG (85 aa)) constitute a KH type-2 domain.

Belongs to the TRAFAC class TrmE-Era-EngA-EngB-Septin-like GTPase superfamily. Era GTPase family. In terms of assembly, monomer.

It localises to the cytoplasm. The protein resides in the cell inner membrane. In terms of biological role, an essential GTPase that binds both GDP and GTP, with rapid nucleotide exchange. Plays a role in 16S rRNA processing and 30S ribosomal subunit biogenesis and possibly also in cell cycle regulation and energy metabolism. In Pseudomonas putida (strain ATCC 47054 / DSM 6125 / CFBP 8728 / NCIMB 11950 / KT2440), this protein is GTPase Era.